The primary structure comprises 930 residues: Translation initiation factor IF-2 (930 aa).

Positions 50 to 67 (FKPAAAPKVEAKPAAPKV) are enriched in low complexity. Disordered regions lie at residues 50–195 (FKPA…PRID) and 260–346 (EVVP…HELP). Composition is skewed to basic and acidic residues over residues 68 to 90 (SAEKKTEKSEPAKPAVAKEEAKP) and 110 to 125 (FKAEREARAKEQAERR). Low complexity predominate over residues 129–141 (KGNNRDQQQNGNR). 2 stretches are compositionally biased toward basic and acidic residues: residues 157–167 (RDNRRFNDQAK) and 262–295 (VPEKKEPAVDTRRKKQARPDKNRDDYDHEEDGPR). Positions 309–318 (NQKNSNWNNN) are enriched in low complexity. Over residues 337–346 (VTERKFHELP) the composition is skewed to basic and acidic residues. Positions 432–599 (ERPPVVTIMG…TVLLVAEIQE (168 aa)) constitute a tr-type G domain. The interval 441–448 (GHVDHGKT) is G1. Residue 441–448 (GHVDHGKT) participates in GTP binding. The tract at residues 466–470 (GITQH) is G2. Residues 487-490 (DTPG) are G3. GTP contacts are provided by residues 487-491 (DTPGH) and 541-544 (NKID). The G4 stretch occupies residues 541–544 (NKID). The segment at 577-579 (SAK) is G5.

Belongs to the TRAFAC class translation factor GTPase superfamily. Classic translation factor GTPase family. IF-2 subfamily.

The protein resides in the cytoplasm. Its function is as follows. One of the essential components for the initiation of protein synthesis. Protects formylmethionyl-tRNA from spontaneous hydrolysis and promotes its binding to the 30S ribosomal subunits. Also involved in the hydrolysis of GTP during the formation of the 70S ribosomal complex. This is Translation initiation factor IF-2 from Streptococcus pneumoniae (strain ATCC BAA-255 / R6).